We begin with the raw amino-acid sequence, 329 residues long: uncharacterized protein (329 aa).

A run of 7 helical transmembrane segments spans residues 29 to 49 (IVLWALFVFCAIATAFLAISH), 78 to 98 (VLVAQILTPIFTVLLILCWMG), 120 to 140 (KKWLLWAIFIPQLTLTNSLLV), 164 to 184 (WMIGFFVVWFIQLFLGFLIYL), 217 to 237 (YFFLGLIFAFMDLTIIVLLVI), 260 to 280 (FFWTALAIDVIGLIMTISFIV), and 299 to 319 (GSSLMALITIATLVTTILLFI).

To M.pneumoniae MPN_129.

Its subcellular location is the cell membrane. This is an uncharacterized protein from Mycoplasma pneumoniae (strain ATCC 29342 / M129 / Subtype 1) (Mycoplasmoides pneumoniae).